A 239-amino-acid chain; its full sequence is Transmembrane emp24 domain-containing protein 6 (239 aa).

The signal sequence occupies residues 1 to 21 (MFPLLLVAELVVLSLVTSVKS). At 22 to 200 (QETDPLHGSK…FFLLQSNYTY (179 aa)) the chain is on the lumenal side. The 86-residue stretch at 53 to 138 (IECFWQFADQ…SIQVYLNFGV (86 aa)) folds into the GOLD domain. N-linked (GlcNAc...) asparagine glycosylation is found at asparagine 156 and asparagine 197. Residues 201–223 (VNWWSTAQSLAIVLSGALQLYFL) traverse the membrane as a helical segment. Residues 224–239 (KRLFTASTTDTKKPRC) are Cytoplasmic-facing.

Belongs to the EMP24/GP25L family.

The protein localises to the endoplasmic reticulum membrane. This is Transmembrane emp24 domain-containing protein 6 (Tmed6) from Mus musculus (Mouse).